A 201-amino-acid polypeptide reads, in one-letter code: Retinol-binding protein 4 (201 aa).

The first 18 residues, 1–18 (MEWVWALVVLAALGSAGA), serve as a signal peptide directing secretion. Cystine bridges form between Cys-22–Cys-178, Cys-88–Cys-192, and Cys-138–Cys-147. Substrate is bound at residue Gln-116. The residue at position 139 (Arg-139) is an Omega-N-methylarginine.

Belongs to the calycin superfamily. Lipocalin family. As to quaternary structure, interacts with TTR. Interaction with TTR prevents its loss by filtration through the kidney glomeruli. Interacts with STRA6.

The protein localises to the secreted. Functionally, retinol-binding protein that mediates retinol transport in blood plasma. Delivers retinol from the liver stores to the peripheral tissues. Transfers the bound all-trans retinol to STRA6, that then facilitates retinol transport across the cell membrane. The polypeptide is Retinol-binding protein 4 (RBP4) (Equus caballus (Horse)).